A 268-amino-acid polypeptide reads, in one-letter code: MDSLTTHPATAQQARAFTSPSSLSFPGGTAFPGGADLTPPSDKDANMATNGQSANGNVNGQQQGANAANGNGVMPATPAATPGASAPGSGIVPTLQNIVATVNLDCRLDLKTIALHARNAEYNPKRFAAVIMRIREPKTTALIFASGKMVVTGAKSEDDSKLASRKYARIIQKLGFNAKFTDFKIQNIVGSCDIKFPIRLEGLASRHHNFSSYEPELFPGLIYRMMKPKIVLLIFVSGKIVLTGAKVREEIYQAFELIYPVLSDFRKV.

A compositionally biased stretch (polar residues) spans 1–24 (MDSLTTHPATAQQARAFTSPSSLS). Residues 1–86 (MDSLTTHPAT…TPAATPGASA (86 aa)) are disordered. Residues 50-86 (NGQSANGNVNGQQQGANAANGNGVMPATPAATPGASA) show a composition bias toward low complexity. 2 tandem repeats follow at residues 95–171 (LQNI…ARII) and 185–262 (IQNI…YPVL).

The protein belongs to the TBP family. In terms of assembly, belongs to the TFIID complex together with the TBP-associated factors (TAFs). Binds DNA as monomer.

It localises to the nucleus. Its function is as follows. General transcription factor that functions at the core of the DNA-binding multiprotein factor TFIID. Binding of TFIID to the TATA box is the initial transcriptional step of the pre-initiation complex (PIC), playing a role in the activation of eukaryotic genes transcribed by RNA polymerase II. This Emericella nidulans (strain FGSC A4 / ATCC 38163 / CBS 112.46 / NRRL 194 / M139) (Aspergillus nidulans) protein is TATA-box-binding protein (tbpA).